Here is a 130-residue protein sequence, read N- to C-terminus: Small ribosomal subunit protein uS9 (130 aa).

The interval 105-130 is disordered; the sequence is TRDPRMKERKKYGLKGARRAPQFSKR. A compositionally biased stretch (basic residues) spans 111 to 130; sequence KERKKYGLKGARRAPQFSKR.

The protein belongs to the universal ribosomal protein uS9 family.

The polypeptide is Small ribosomal subunit protein uS9 (Bacillus pumilus (strain SAFR-032)).